The following is a 108-amino-acid chain: uncharacterized protein (108 aa).

Residues 1-12 (MSNQQKQLQLPS) are compositionally biased toward polar residues. The disordered stretch occupies residues 1–22 (MSNQQKQLQLPSASIKKPKEKQ).

This is an uncharacterized protein from Dictyostelium discoideum (Social amoeba).